A 292-amino-acid polypeptide reads, in one-letter code: Small ribosomal subunit protein uS3 (292 aa).

Residues 39-110 (IRLEIMKFLK…KISIKIKEVK (72 aa)) form the KH type-2 domain. A disordered region spans residues 247–268 (KANERQSRAALNKKDGLSKDET).

The protein belongs to the universal ribosomal protein uS3 family. In terms of assembly, part of the 30S ribosomal subunit. Forms a tight complex with proteins S10 and S14.

In terms of biological role, binds the lower part of the 30S subunit head. Binds mRNA in the 70S ribosome, positioning it for translation. The polypeptide is Small ribosomal subunit protein uS3 (Borrelia garinii subsp. bavariensis (strain ATCC BAA-2496 / DSM 23469 / PBi) (Borreliella bavariensis)).